The sequence spans 75 residues: Small ribosomal subunit protein bS18 (75 aa).

Ala-2 carries the N-acetylalanine modification.

Belongs to the bacterial ribosomal protein bS18 family. In terms of assembly, part of the 30S ribosomal subunit. Forms a tight heterodimer with protein bS6.

Functionally, binds as a heterodimer with protein bS6 to the central domain of the 16S rRNA, where it helps stabilize the platform of the 30S subunit. The chain is Small ribosomal subunit protein bS18 (rpsR) from Salmonella typhimurium (strain LT2 / SGSC1412 / ATCC 700720).